The chain runs to 312 residues: Protoheme IX farnesyltransferase (312 aa).

9 consecutive transmembrane segments (helical) span residues 29–49 (VMSL…GHMN), 50–70 (PVLA…SGAL), 90–110 (IPAG…LSAF), 117–137 (LMVN…YAVV), 150–170 (IVIG…AATG), 177–197 (VVLF…LSLF), 223–243 (ALFY…LGFA), 248–268 (GAIS…MWVA), and 292–312 (LFAV…FGGF).

It belongs to the UbiA prenyltransferase family. Protoheme IX farnesyltransferase subfamily.

The protein localises to the cell inner membrane. The catalysed reaction is heme b + (2E,6E)-farnesyl diphosphate + H2O = Fe(II)-heme o + diphosphate. It functions in the pathway porphyrin-containing compound metabolism; heme O biosynthesis; heme O from protoheme: step 1/1. Its function is as follows. Converts heme B (protoheme IX) to heme O by substitution of the vinyl group on carbon 2 of heme B porphyrin ring with a hydroxyethyl farnesyl side group. This chain is Protoheme IX farnesyltransferase, found in Brucella anthropi (strain ATCC 49188 / DSM 6882 / CCUG 24695 / JCM 21032 / LMG 3331 / NBRC 15819 / NCTC 12168 / Alc 37) (Ochrobactrum anthropi).